We begin with the raw amino-acid sequence, 195 residues long: UPF0167 protein CbrC (195 aa).

Belongs to the UPF0167 family.

This chain is UPF0167 protein CbrC (cbrC), found in Escherichia coli (strain K12).